The sequence spans 396 residues: UPF0164 protein TP_0858 (396 aa).

An N-terminal signal peptide occupies residues 1–28 (MGTMIRHTFTHRCGALLCALALGSSTMA).

This sequence belongs to the UPF0164 family.

In Treponema pallidum (strain Nichols), this protein is UPF0164 protein TP_0858.